A 78-amino-acid polypeptide reads, in one-letter code: NAD(P)H-quinone oxidoreductase subunit O (78 aa).

This sequence belongs to the complex I NdhO subunit family. As to quaternary structure, NDH-1 can be composed of about 15 different subunits; different subcomplexes with different compositions have been identified which probably have different functions.

It is found in the cellular thylakoid membrane. It carries out the reaction a plastoquinone + NADH + (n+1) H(+)(in) = a plastoquinol + NAD(+) + n H(+)(out). The enzyme catalyses a plastoquinone + NADPH + (n+1) H(+)(in) = a plastoquinol + NADP(+) + n H(+)(out). Its function is as follows. NDH-1 shuttles electrons from an unknown electron donor, via FMN and iron-sulfur (Fe-S) centers, to quinones in the respiratory and/or the photosynthetic chain. The immediate electron acceptor for the enzyme in this species is believed to be plastoquinone. Couples the redox reaction to proton translocation, and thus conserves the redox energy in a proton gradient. Cyanobacterial NDH-1 also plays a role in inorganic carbon-concentration. The chain is NAD(P)H-quinone oxidoreductase subunit O from Prochlorococcus marinus (strain MIT 9215).